The primary structure comprises 160 residues: UPF0758 protein YfjY (160 aa).

One can recognise an MPN domain in the interval 38–160 (AFTSTQAARD…IYSFAEHGLL (123 aa)). H109, H111, and D122 together coordinate Zn(2+). A JAMM motif motif is present at residues 109-122 (HNHPSGDTTPSQAD).

The protein belongs to the UPF0758 family.

In Escherichia coli (strain K12), this protein is UPF0758 protein YfjY (yfjY).